The primary structure comprises 342 residues: Arginase 1, mitochondrial (342 aa).

The N-terminal 22 residues, 1–22 (MSRIIGRKGINYIHRLNSASFT), are a transit peptide targeting the mitochondrion. Residues Ser-77 and 96–99 (GSTN) each bind L-ornithine. Residues His-161, Asp-185, His-187, and Asp-189 each coordinate Mn(2+). 189 to 191 (DIY) contacts L-ornithine. Substrate is bound at residue 195–197 (EGN). L-ornithine is bound at residue Ser-224. 2 residues coordinate Mn(2+): Asp-270 and Asp-272. Glu-313 contacts substrate.

The protein belongs to the arginase family. In terms of assembly, forms homohexamers. Requires Mn(2+) as cofactor. In terms of tissue distribution, expressed in vasculature of roots, root tips, cotyledons, leaves, cauline leaves, stems, sepals and pollen.

Its subcellular location is the mitochondrion. It carries out the reaction L-arginine + H2O = urea + L-ornithine. It catalyses the reaction agmatine + H2O = urea + putrescine. The protein operates within nitrogen metabolism; urea cycle; L-ornithine and urea from L-arginine: step 1/1. It participates in amine and polyamine biosynthesis; putrescine biosynthesis via agmatine pathway; putrescine from agmatine: step 1/1. Functionally, catalyzes the hydrolysis of L-arginine to urea and L-ornithine. The latter can be utilized in the urea cycle or as a precursor for the synthesis of both polyamines and proline. Possesses agmatinase activity. Catalyzes the formation of putrescine from agmatine. This is Arginase 1, mitochondrial from Arabidopsis thaliana (Mouse-ear cress).